The primary structure comprises 588 residues: Aspartate--tRNA ligase (588 aa).

Glutamate 174 provides a ligand contact to L-aspartate. The segment at 198-201 (QLFK) is aspartate. Arginine 220 is an L-aspartate binding site. ATP contacts are provided by residues 220–222 (RDE) and glutamine 229. Position 448 (histidine 448) interacts with L-aspartate. Glutamate 482 provides a ligand contact to ATP. Arginine 489 serves as a coordination point for L-aspartate. Position 534 to 537 (534 to 537 (GLDR)) interacts with ATP.

It belongs to the class-II aminoacyl-tRNA synthetase family. Type 1 subfamily. As to quaternary structure, homodimer.

Its subcellular location is the cytoplasm. It carries out the reaction tRNA(Asp) + L-aspartate + ATP = L-aspartyl-tRNA(Asp) + AMP + diphosphate. Functionally, catalyzes the attachment of L-aspartate to tRNA(Asp) in a two-step reaction: L-aspartate is first activated by ATP to form Asp-AMP and then transferred to the acceptor end of tRNA(Asp). The polypeptide is Aspartate--tRNA ligase (Exiguobacterium sibiricum (strain DSM 17290 / CCUG 55495 / CIP 109462 / JCM 13490 / 255-15)).